We begin with the raw amino-acid sequence, 225 residues long: UPF0758 protein AZOSEA04420 (225 aa).

The region spanning 102–225 is the MPN domain; it reads VFESPLAVRN…PLSFAERGLL (124 aa). 3 residues coordinate Zn(2+): His173, His175, and Asp186. The JAMM motif signature appears at 173 to 186; it reads HNHPSGAAEPSPAD.

It belongs to the UPF0758 family.

This is UPF0758 protein AZOSEA04420 from Aromatoleum aromaticum (strain DSM 19018 / LMG 30748 / EbN1) (Azoarcus sp. (strain EbN1)).